The chain runs to 252 residues: DNA-directed RNA polymerase III subunit rpc8 (252 aa).

Positions 214 to 252 are disordered; that stretch reads WTNQSAGDDDENEEDGGENQDDEVAEDDGGEEPTIEEDE. A compositionally biased stretch (acidic residues) spans 220-252; it reads GDDDENEEDGGENQDDEVAEDDGGEEPTIEEDE.

The protein belongs to the eukaryotic RPB7/RPC8 RNA polymerase subunit family. Component of the RNA polymerase III (Pol III) complex consisting of several subunits.

Its subcellular location is the nucleus. DNA-dependent RNA polymerase catalyzes the transcription of DNA into RNA using the four ribonucleoside triphosphates as substrates. The sequence is that of DNA-directed RNA polymerase III subunit rpc8 (polr3h-1) from Dictyostelium discoideum (Social amoeba).